We begin with the raw amino-acid sequence, 116 residues long: Tyrosine-protein phosphatase 14 (116 aa).

In terms of domain architecture, Tyrosine-protein phosphatase spans 1–116 (WRMITQEKAQ…SLKNPGPVIV (116 aa)). Asp-84 serves as a coordination point for substrate.

Belongs to the protein-tyrosine phosphatase family.

It catalyses the reaction O-phospho-L-tyrosyl-[protein] + H2O = L-tyrosyl-[protein] + phosphate. The chain is Tyrosine-protein phosphatase 14 (STY-14) from Styela plicata (Wrinkled sea squirt).